Reading from the N-terminus, the 124-residue chain is Period circadian protein (124 aa).

The disordered stretch occupies residues 30–124 (TAPVELDPPK…TVTLTESLLN (95 aa)). The span at 71–96 (SGNFTTGSNVRMSSVTNTSNAGTGTS) shows a compositional bias: low complexity. Over residues 97–107 (SAGGNGNGGSG) the composition is skewed to gly residues.

In terms of assembly, forms a heterodimer with timeless (TIM); the complex then translocates into the nucleus. Phosphorylated with a circadian rhythmicity, probably by the double-time protein (dbt). Phosphorylation could be implicated in the stability of per monomer and in the formation of heterodimer per-tim.

It localises to the nucleus. The protein resides in the cytoplasm. It is found in the perinuclear region. Its function is as follows. Essential for biological clock functions. Determines the period length of circadian and ultradian rhythms; an increase in PER dosage leads to shortened circadian rhythms and a decrease leads to lengthened circadian rhythms. Essential for the circadian rhythmicity of locomotor activity, eclosion behavior, and for the rhythmic component of the male courtship song that originates in the thoracic nervous system. The biological cycle depends on the rhythmic formation and nuclear localization of the TIM-PER complex. Light induces the degradation of TIM, which promotes elimination of PER. Nuclear activity of the heterodimer coordinatively regulates PER and TIM transcription through a negative feedback loop. Behaves as a negative element in circadian transcriptional loop. Does not appear to bind DNA, suggesting indirect transcriptional inhibition. The chain is Period circadian protein (per) from Hirtodrosophila pictiventris (Fruit fly).